The following is a 223-amino-acid chain: PRA1 family protein B5 (223 aa).

The next 5 helical transmembrane spans lie at 83 to 103 (SSYFRVNYVCIVALILGFSLL), 105 to 125 (HPFSLILLLCLAASWLFLYLF), 146 to 166 (GGLILSTIAVIFFTSVGSVLI), 170 to 190 (MIGIATICVHGAFRAPDDLFL), and 196 to 216 (AASGFLSFIGVPAIPSVAPSA).

It belongs to the PRA1 family. In terms of assembly, interacts with PRA1B1, PRA1B2, PRA1B3, PRA1B4, PRA1B6 and PRA1E. As to expression, expressed in roots, lateral roots, lateral root caps, columella cells, leaves, and shoot apex.

It localises to the endosome membrane. In terms of biological role, may be involved in both secretory and endocytic intracellular trafficking in the endosomal/prevacuolar compartments. This chain is PRA1 family protein B5 (PRA1B5), found in Arabidopsis thaliana (Mouse-ear cress).